The following is a 179-amino-acid chain: Probable inosine/xanthosine triphosphatase (179 aa).

Residue 13-18 (STNPVK) coordinates substrate. Q70 contacts Mg(2+).

This sequence belongs to the YjjX NTPase family. In terms of assembly, homodimer. It depends on Mg(2+) as a cofactor. Mn(2+) is required as a cofactor.

It catalyses the reaction XTP + H2O = XDP + phosphate + H(+). It carries out the reaction ITP + H2O = IDP + phosphate + H(+). Functionally, phosphatase that hydrolyzes non-canonical purine nucleotides such as XTP and ITP to their respective diphosphate derivatives. Probably excludes non-canonical purines from DNA/RNA precursor pool, thus preventing their incorporation into DNA/RNA and avoiding chromosomal lesions. The polypeptide is Probable inosine/xanthosine triphosphatase (Methanocaldococcus jannaschii (strain ATCC 43067 / DSM 2661 / JAL-1 / JCM 10045 / NBRC 100440) (Methanococcus jannaschii)).